Reading from the N-terminus, the 380-residue chain is Actinidain (380 aa).

The signal sequence occupies residues 1–24 (MGLPKSFVSMSLLFFSTLLILSLA). Residues 25–126 (FNAKNLTQRT…NRYEPRVGQV (102 aa)) constitute a propeptide, activation peptide. N-linked (GlcNAc...) asparagine glycosylation is found at asparagine 29, asparagine 81, and asparagine 111. Cystine bridges form between cysteine 148/cysteine 191, cysteine 182/cysteine 224, and cysteine 282/cysteine 332. Cysteine 151 is a catalytic residue. Residues histidine 288 and asparagine 308 contribute to the active site.

This sequence belongs to the peptidase C1 family. Fruit, present in small cells of the outer pericarp of mature fruit, but not large cells.

The enzyme catalyses Specificity close to that of papain.. Its function is as follows. Cysteine protease responsible for the cleavage of kiwellin into kissper and KiTH. The protein is Actinidain of Actinidia deliciosa (Kiwi).